Here is a 410-residue protein sequence, read N- to C-terminus: Ribosomal protein S6 kinase-related protein (410 aa).

A Protein kinase domain is found at 107-274 (LKILGLVAKG…GTLQYMAPEV (168 aa)). ATP-binding positions include 113 to 121 (VAKGSFGTV) and Lys-136. Catalysis depends on Asp-229, which acts as the Proton acceptor.

Belongs to the protein kinase superfamily. Ser/Thr protein kinase family.

It catalyses the reaction L-seryl-[protein] + ATP = O-phospho-L-seryl-[protein] + ADP + H(+). The catalysed reaction is L-threonyl-[protein] + ATP = O-phospho-L-threonyl-[protein] + ADP + H(+). This chain is Ribosomal protein S6 kinase-related protein, found in Homo sapiens (Human).